The following is a 496-amino-acid chain: Probable diguanylate cyclase DgcJ (496 aa).

The next 2 helical transmembrane spans lie at 11–31 (FIAA…LVAS) and 305–325 (ILYF…TALI). A GGDEF domain is found at 374 to 496 (SSVMFIAIDM…VNKQNKNSRS (123 aa)). D382 is a Mg(2+) binding site. The substrate site is built by N390, H395, and D399. Residue D425 participates in Mg(2+) binding. The active-site Proton acceptor is the D425.

As to quaternary structure, homodimer. It depends on Mg(2+) as a cofactor.

It localises to the cell inner membrane. The catalysed reaction is 2 GTP = 3',3'-c-di-GMP + 2 diphosphate. The protein operates within purine metabolism; 3',5'-cyclic di-GMP biosynthesis. Its function is as follows. Catalyzes the synthesis of cyclic-di-GMP (c-di-GMP) via the condensation of 2 GTP molecules. In Escherichia coli (strain K12), this protein is Probable diguanylate cyclase DgcJ.